The primary structure comprises 185 residues: Ribosome-recycling factor (185 aa).

Positions 137-158 (DELKKLEKDHTASEDEVKRAQD) are disordered.

It belongs to the RRF family.

Its subcellular location is the cytoplasm. In terms of biological role, responsible for the release of ribosomes from messenger RNA at the termination of protein biosynthesis. May increase the efficiency of translation by recycling ribosomes from one round of translation to another. The sequence is that of Ribosome-recycling factor from Desulfitobacterium hafniense (strain Y51).